Here is a 409-residue protein sequence, read N- to C-terminus: Adenosine deaminase (409 aa).

H65, H67, H207, and D314 together coordinate Zn(2+).

Belongs to the metallo-dependent hydrolases superfamily. Requires Zn(2+) as cofactor.

It carries out the reaction adenosine + H2O + H(+) = inosine + NH4(+). Catalyzes the deamination of adenosine into inosine. Is also able to deaminate adenine, but with considerably less efficiency. Is not active toward 6-chloroadenine. The polypeptide is Adenosine deaminase (Helicobacter pylori (strain ATCC 700392 / 26695) (Campylobacter pylori)).